The following is a 361-amino-acid chain: Uroporphyrinogen decarboxylase (361 aa).

Residues 44–48 (RQAGR), Asp-93, Tyr-168, Ser-223, and His-337 contribute to the substrate site.

The protein belongs to the uroporphyrinogen decarboxylase family. Homodimer.

It is found in the cytoplasm. It catalyses the reaction uroporphyrinogen III + 4 H(+) = coproporphyrinogen III + 4 CO2. The protein operates within porphyrin-containing compound metabolism; protoporphyrin-IX biosynthesis; coproporphyrinogen-III from 5-aminolevulinate: step 4/4. Catalyzes the decarboxylation of four acetate groups of uroporphyrinogen-III to yield coproporphyrinogen-III. The polypeptide is Uroporphyrinogen decarboxylase (Thermobifida fusca (strain YX)).